The primary structure comprises 275 residues: Methyltransferase str2 (275 aa).

Belongs to the methyltransferase superfamily. LaeA methyltransferase family.

Its pathway is mycotoxin biosynthesis. Methyltransferase; part of the gene cluster that mediates the biosynthesis of strobilurin A, an antifungal polyketide that contains a key beta-methoxyacrylate toxophore that targets the complex III of the mitochondrial electron transport chain. Strobilurin biosynthesis begins with construction of benzoyl CoA by step-wise elimination of ammonia from phenylalanine by the phenylalanine ammonia-lyase str11, oxygenation by str8 and retro-Claisen reaction to form benzoic acid, which is activated to its CoA thiolester benzoyl CoA by the dedicated CoA ligase str10. Benzoyl CoA forms the starter unit for the highly reducing polyketide synthase stpks1 that produces the polyketide prestrobilutin A. The FAD-dependent oxygenase str9 then catalyzes the key oxidative rearrangement responsible for the creation of the beta-methoxyacrylate toxophore. Str9 performs epoxidation of the 2,3 olefin of prestrobilutin A, followed by Meinwald rearrangement to furnish the aldehyde intermediate. Rapid enolization of the aldehyde intermediate would give the beta-methoxyacrylate skeleton and methylations catalyzed by str2 and str3 complete the synthesis and lead to the production of strobilurin A. The short-chain dehydrogenase stl2 and the dehydrogenase str4 play a role in the shunt pathway leading to the production of bolineol. The cluster encodes no obvious halogenase gene that could be involved in production of strobilurin B, nor any obvious dimethylallyl-transferase that could be involved in the production of strobilurin G. It is possible that unknown proteins encoded in, or near, the cluster (such as str1 or stl1) may form new classes of halogenases or dimethylally-transferases, or that the responsible genes are located elsewhere on the genome. Similarly, proteins encoded by str5/str6 hydrolases appear to have no chemical role in the biosynthesis of strobilurin A. Finally, no obvious self-resistance gene is found within the cluster. The protein is Methyltransferase str2 of Strobilurus tenacellus.